Here is a 222-residue protein sequence, read N- to C-terminus: Glycerol-3-phosphate acyltransferase (222 aa).

The next 6 membrane-spanning stretches (helical) occupy residues 4 to 24 (ALLL…IPTG), 56 to 76 (PAAI…VALV), 87 to 107 (ALPA…VVLG), 130 to 150 (FMLN…VIFF), 153 to 173 (IVSL…LALQ), and 174 to 191 (LPPP…YVIV).

It belongs to the PlsY family. In terms of assembly, probably interacts with PlsX.

Its subcellular location is the cell inner membrane. It carries out the reaction an acyl phosphate + sn-glycerol 3-phosphate = a 1-acyl-sn-glycero-3-phosphate + phosphate. Its pathway is lipid metabolism; phospholipid metabolism. Catalyzes the transfer of an acyl group from acyl-phosphate (acyl-PO(4)) to glycerol-3-phosphate (G3P) to form lysophosphatidic acid (LPA). This enzyme utilizes acyl-phosphate as fatty acyl donor, but not acyl-CoA or acyl-ACP. This chain is Glycerol-3-phosphate acyltransferase, found in Synechocystis sp. (strain ATCC 27184 / PCC 6803 / Kazusa).